Reading from the N-terminus, the 391-residue chain is Processive diacylglycerol beta-glucosyltransferase (391 aa).

The protein belongs to the glycosyltransferase 28 family. UgtP subfamily.

Its subcellular location is the cell membrane. The catalysed reaction is a 1,2-diacyl-3-O-(beta-D-glucopyranosyl)-sn-glycerol + UDP-alpha-D-glucose = a 1,2-diacyl-3-O-(beta-D-Glc-(1-&gt;6)-beta-D-Glc)-sn-glycerol + UDP + H(+). It carries out the reaction a 1,2-diacyl-sn-glycerol + UDP-alpha-D-glucose = a 1,2-diacyl-3-O-(beta-D-glucopyranosyl)-sn-glycerol + UDP + H(+). It functions in the pathway glycolipid metabolism; diglucosyl-diacylglycerol biosynthesis. In terms of biological role, processive glucosyltransferase involved in the biosynthesis of both the bilayer- and non-bilayer-forming membrane glucolipids. Is able to successively transfer two glucosyl residues to diacylglycerol (DAG), thereby catalyzing the formation of beta-monoglucosyl-DAG (3-O-(beta-D-glucopyranosyl)-1,2-diacyl-sn-glycerol) and beta-diglucosyl-DAG (3-O-(beta-D-glucopyranosyl-beta-(1-&gt;6)-D-glucopyranosyl)-1,2-diacyl-sn-glycerol). Beta-diglucosyl-DAG is the predominant glycolipid found in Bacillales and is also used as a membrane anchor for lipoteichoic acid (LTA). This is Processive diacylglycerol beta-glucosyltransferase from Staphylococcus saprophyticus subsp. saprophyticus (strain ATCC 15305 / DSM 20229 / NCIMB 8711 / NCTC 7292 / S-41).